The sequence spans 344 residues: Dihydroorotase (344 aa).

The Zn(2+) site is built by His13 and His15. Substrate contacts are provided by residues His15–Arg17 and Asn41. Residues Lys98, His135, and His173 each contribute to the Zn(2+) site. Residue Lys98 is modified to N6-carboxylysine. His135 provides a ligand contact to substrate. Leu218 is a substrate binding site. Residue Asp247 participates in Zn(2+) binding. Asp247 is a catalytic residue. Substrate is bound by residues His251 and Ala263.

This sequence belongs to the metallo-dependent hydrolases superfamily. DHOase family. Class II DHOase subfamily. Homodimer. The cofactor is Zn(2+).

It catalyses the reaction (S)-dihydroorotate + H2O = N-carbamoyl-L-aspartate + H(+). It functions in the pathway pyrimidine metabolism; UMP biosynthesis via de novo pathway; (S)-dihydroorotate from bicarbonate: step 3/3. Catalyzes the reversible cyclization of carbamoyl aspartate to dihydroorotate. In Neisseria meningitidis serogroup C / serotype 2a (strain ATCC 700532 / DSM 15464 / FAM18), this protein is Dihydroorotase.